Reading from the N-terminus, the 203-residue chain is Small ribosomal subunit protein uS4 (203 aa).

Residues 93–156 (RRLDNVVYRL…LKVPAILEAV (64 aa)) enclose the S4 RNA-binding domain.

Belongs to the universal ribosomal protein uS4 family. Part of the 30S ribosomal subunit. Contacts protein S5. The interaction surface between S4 and S5 is involved in control of translational fidelity.

In terms of biological role, one of the primary rRNA binding proteins, it binds directly to 16S rRNA where it nucleates assembly of the body of the 30S subunit. Its function is as follows. With S5 and S12 plays an important role in translational accuracy. The chain is Small ribosomal subunit protein uS4 from Streptococcus pneumoniae serotype 2 (strain D39 / NCTC 7466).